Consider the following 211-residue polypeptide: Uracil phosphoribosyltransferase (211 aa).

A GTP-binding site is contributed by 30–34 (KGLVR). 5-phospho-alpha-D-ribose 1-diphosphate contacts are provided by residues R79, R104, and 133-141 (DPMLATGIT). Residues I197 and 202–204 (GDA) contribute to the uracil site. D203 serves as a coordination point for 5-phospho-alpha-D-ribose 1-diphosphate.

This sequence belongs to the UPRTase family. Mg(2+) serves as cofactor.

It catalyses the reaction UMP + diphosphate = 5-phospho-alpha-D-ribose 1-diphosphate + uracil. Its pathway is pyrimidine metabolism; UMP biosynthesis via salvage pathway; UMP from uracil: step 1/1. Allosterically activated by GTP. Its function is as follows. Catalyzes the conversion of uracil and 5-phospho-alpha-D-ribose 1-diphosphate (PRPP) to UMP and diphosphate. This Pyrobaculum islandicum (strain DSM 4184 / JCM 9189 / GEO3) protein is Uracil phosphoribosyltransferase.